A 92-amino-acid chain; its full sequence is Small ribosomal subunit protein uS19 (92 aa).

This sequence belongs to the universal ribosomal protein uS19 family.

In terms of biological role, protein S19 forms a complex with S13 that binds strongly to the 16S ribosomal RNA. The sequence is that of Small ribosomal subunit protein uS19 from Allorhizobium ampelinum (strain ATCC BAA-846 / DSM 112012 / S4) (Agrobacterium vitis (strain S4)).